A 428-amino-acid polypeptide reads, in one-letter code: Nocturnin (428 aa).

Residues 1-72 (MYQSPRRLCS…PMGNGTSRLY (72 aa)) constitute a mitochondrion transit peptide. Residues 21–66 (RRTLVPGPRRTLAPPVLGSRPASPQLQAAASGAARSRPRTVSPMGN) form a disordered region. The segment covering 39–55 (SRPASPQLQAAASGAAR) has biased composition (low complexity). Glu192 provides a ligand contact to Mg(2+). Substrate contacts are provided by residues Glu192, 216–218 (KPW), Asn260, 283–286 (HLKA), and 321–323 (DFN). The interval 340-350 (NLNSAYKLLSP) is interaction with PPARG. His411 contacts substrate.

Belongs to the CCR4/nocturin family. As to quaternary structure, interacts with PPARG. Mg(2+) serves as cofactor.

It is found in the cytoplasm. The protein resides in the nucleus. The protein localises to the perinuclear region. Its subcellular location is the mitochondrion. It carries out the reaction NADP(+) + H2O = phosphate + NAD(+). The enzyme catalyses NADPH + H2O = phosphate + NADH. Its function is as follows. Phosphatase which catalyzes the conversion of NADP(+) to NAD(+) and of NADPH to NADH. Shows a small preference for NADPH over NADP(+). Represses translation and promotes degradation of target mRNA molecules. Plays an important role in post-transcriptional regulation of metabolic genes under circadian control. Exerts a rhythmic post-transcriptional control of genes necessary for metabolic functions including nutrient absorption, glucose/insulin sensitivity, lipid metabolism, adipogenesis, inflammation and osteogenesis. Plays an important role in favoring adipogenesis over osteoblastogenesis and acts as a key regulator of the adipogenesis/osteogenesis balance. Promotes adipogenesis by facilitating PPARG nuclear translocation which activates its transcriptional activity. Regulates circadian expression of NOS2 in the liver and negatively regulates the circadian expression of IGF1 in the bone. Critical for proper development of early embryos. The sequence is that of Nocturnin from Rattus norvegicus (Rat).